The primary structure comprises 236 residues: Pyridoxal 5'-phosphate synthase subunit PdxT (236 aa).

61 to 63 (GES) lines the L-glutamine pocket. Residue C93 is the Nucleophile of the active site. L-glutamine contacts are provided by residues R127 and 163–164 (IR). Catalysis depends on charge relay system residues H215 and E217.

This sequence belongs to the glutaminase PdxT/SNO family. As to quaternary structure, in the presence of PdxS, forms a dodecamer of heterodimers. Only shows activity in the heterodimer.

It catalyses the reaction aldehydo-D-ribose 5-phosphate + D-glyceraldehyde 3-phosphate + L-glutamine = pyridoxal 5'-phosphate + L-glutamate + phosphate + 3 H2O + H(+). It carries out the reaction L-glutamine + H2O = L-glutamate + NH4(+). Its pathway is cofactor biosynthesis; pyridoxal 5'-phosphate biosynthesis. Catalyzes the hydrolysis of glutamine to glutamate and ammonia as part of the biosynthesis of pyridoxal 5'-phosphate. The resulting ammonia molecule is channeled to the active site of PdxS. This is Pyridoxal 5'-phosphate synthase subunit PdxT from Pseudarthrobacter chlorophenolicus (strain ATCC 700700 / DSM 12829 / CIP 107037 / JCM 12360 / KCTC 9906 / NCIMB 13794 / A6) (Arthrobacter chlorophenolicus).